Consider the following 618-residue polypeptide: Proline--tRNA ligase (618 aa).

This sequence belongs to the class-II aminoacyl-tRNA synthetase family. ProS type 1 subfamily. Homodimer.

The protein resides in the cytoplasm. The catalysed reaction is tRNA(Pro) + L-proline + ATP = L-prolyl-tRNA(Pro) + AMP + diphosphate. Catalyzes the attachment of proline to tRNA(Pro) in a two-step reaction: proline is first activated by ATP to form Pro-AMP and then transferred to the acceptor end of tRNA(Pro). As ProRS can inadvertently accommodate and process non-cognate amino acids such as alanine and cysteine, to avoid such errors it has two additional distinct editing activities against alanine. One activity is designated as 'pretransfer' editing and involves the tRNA(Pro)-independent hydrolysis of activated Ala-AMP. The other activity is designated 'posttransfer' editing and involves deacylation of mischarged Ala-tRNA(Pro). The misacylated Cys-tRNA(Pro) is not edited by ProRS. The chain is Proline--tRNA ligase from Streptococcus pyogenes serotype M1.